We begin with the raw amino-acid sequence, 562 residues long: Arf-GAP domain and FG repeat-containing protein 1 (562 aa).

The region spanning 11 to 135 is the Arf-GAP domain; sequence EKHLKMLRDM…WYVPPEQAKV (125 aa). The C4-type zinc finger occupies 29–52; sequence CFDCDQRGPTYVNMTVGSFVCTSC. Serine 167 bears the Phosphoserine mark. A disordered region spans residues 168–194; the sequence is APALHLNKGTPSQSPVVGRSQAQQQEK. A compositionally biased stretch (polar residues) spans 176–191; the sequence is GTPSQSPVVGRSQAQQ. Threonine 177 is modified (phosphothreonine). A phosphoserine mark is found at serine 181 and serine 362. O-linked (GlcNAc) serine glycosylation is present at serine 367.

As to quaternary structure, interacts with EPS15R and EPS15. Interacts with FCHO1. O-glycosylated.

It is found in the nucleus. The protein resides in the cytoplasmic vesicle. Its function is as follows. Required for vesicle docking or fusion during acrosome biogenesis. May play a role in RNA trafficking or localization. In Bos taurus (Bovine), this protein is Arf-GAP domain and FG repeat-containing protein 1 (AGFG1).